Here is a 68-residue protein sequence, read N- to C-terminus: Large ribosomal subunit protein bL35 (68 aa).

Belongs to the bacterial ribosomal protein bL35 family.

In Wolbachia pipientis subsp. Culex pipiens (strain wPip), this protein is Large ribosomal subunit protein bL35.